Here is a 177-residue protein sequence, read N- to C-terminus: Inner membrane-spanning protein YciB (177 aa).

5 helical membrane-spanning segments follow: residues 23–43 (MFVATGVAIAATAVMVAWAWF), 50–70 (TMQWISLGLIVVLGGATLLLH), 73–93 (HFIMWKPTVLYWVMGAGLLIS), 119–139 (LTWAWSGFFAFMGALNLFVAY), and 149–169 (FKLFGGMGLMLLFVIAQSLFL).

It belongs to the YciB family.

It localises to the cell inner membrane. Plays a role in cell envelope biogenesis, maintenance of cell envelope integrity and membrane homeostasis. The polypeptide is Inner membrane-spanning protein YciB (Chromobacterium violaceum (strain ATCC 12472 / DSM 30191 / JCM 1249 / CCUG 213 / NBRC 12614 / NCIMB 9131 / NCTC 9757 / MK)).